The following is a 129-amino-acid chain: Glycine cleavage system H protein (129 aa).

Residues 24 to 106 (SYTVGISEHA…FGDGWFFRVM (83 aa)) form the Lipoyl-binding domain. Lys65 carries the post-translational modification N6-lipoyllysine.

Belongs to the GcvH family. In terms of assembly, the glycine cleavage system is composed of four proteins: P, T, L and H. Requires (R)-lipoate as cofactor.

Functionally, the glycine cleavage system catalyzes the degradation of glycine. The H protein shuttles the methylamine group of glycine from the P protein to the T protein. The chain is Glycine cleavage system H protein from Shewanella halifaxensis (strain HAW-EB4).